Consider the following 358-residue polypeptide: Phospho-N-acetylmuramoyl-pentapeptide-transferase (358 aa).

The next 9 helical transmembrane spans lie at 13–35 (LLIL…IFIG), 81–101 (MGGV…NINL), 106–126 (LFLL…DDFL), 142–162 (FFLQ…KDLI), 171–191 (SWQI…LVGI), 201–221 (LDGL…TEIL), 228–248 (LIIF…FLKY), 268–290 (ILGS…GIFI), and 336–356 (IVEN…VLKI).

It belongs to the glycosyltransferase 4 family. MraY subfamily. The cofactor is Mg(2+).

Its subcellular location is the cell inner membrane. The catalysed reaction is UDP-N-acetyl-alpha-D-muramoyl-L-alanyl-gamma-D-glutamyl-meso-2,6-diaminopimeloyl-D-alanyl-D-alanine + di-trans,octa-cis-undecaprenyl phosphate = di-trans,octa-cis-undecaprenyl diphospho-N-acetyl-alpha-D-muramoyl-L-alanyl-D-glutamyl-meso-2,6-diaminopimeloyl-D-alanyl-D-alanine + UMP. The protein operates within cell wall biogenesis; peptidoglycan biosynthesis. Its function is as follows. Catalyzes the initial step of the lipid cycle reactions in the biosynthesis of the cell wall peptidoglycan: transfers peptidoglycan precursor phospho-MurNAc-pentapeptide from UDP-MurNAc-pentapeptide onto the lipid carrier undecaprenyl phosphate, yielding undecaprenyl-pyrophosphoryl-MurNAc-pentapeptide, known as lipid I. This is Phospho-N-acetylmuramoyl-pentapeptide-transferase from Prochlorococcus marinus (strain MIT 9312).